A 235-amino-acid chain; its full sequence is Transmembrane protein 215 (235 aa).

2 helical membrane-spanning segments follow: residues 12-32 (LVVA…VSGM) and 40-60 (IPLL…IALA). Positions 99 to 145 (SDLESGKGSSDELAKKAGLRGKPPPQSQGEVSVASSINSPTPTEEGE) are disordered. Positions 125-140 (SQGEVSVASSINSPTP) are enriched in polar residues.

The protein localises to the membrane. In Homo sapiens (Human), this protein is Transmembrane protein 215 (TMEM215).